We begin with the raw amino-acid sequence, 360 residues long: Fructose import permease protein FrcC (360 aa).

9 helical membrane-spanning segments follow: residues 48-68 (AAVP…ILGG), 84-106 (AIVG…DLSV), 125-145 (GFPP…CGYI), 155-175 (LPPF…NFLY), 205-225 (AVFT…WYVL), 254-274 (MLIS…WALI), 284-304 (AGQF…ISLF), 310-330 (IMGM…LRLM), and 335-355 (QWTY…DQWI).

The protein belongs to the binding-protein-dependent transport system permease family. In terms of assembly, the complex is composed of two ATP-binding proteins (FrcA), two transmembrane proteins (FrcC) and a solute-binding protein (FrcB).

It localises to the cell inner membrane. In terms of biological role, part of the high-affinity ABC transporter complex FrcBCA involved in fructose uptake. Is also a high-affinity transporter for ribose and mannose. Responsible for the translocation of the substrate across the membrane. The polypeptide is Fructose import permease protein FrcC (Rhizobium meliloti (Ensifer meliloti)).